Here is a 476-residue protein sequence, read N- to C-terminus: Bifunctional protein HldE (476 aa).

Residues 1–318 (MKVTLPDFRR…ENAIRGRAET (318 aa)) form a ribokinase region. An ATP-binding site is contributed by 195-198 (NLSE). Asp-264 is an active-site residue. Residues 344-476 (MTNGIFDILH…IIQSIKNGRG (133 aa)) are cytidylyltransferase.

This sequence in the N-terminal section; belongs to the carbohydrate kinase PfkB family. It in the C-terminal section; belongs to the cytidylyltransferase family. As to quaternary structure, homodimer.

It carries out the reaction D-glycero-beta-D-manno-heptose 7-phosphate + ATP = D-glycero-beta-D-manno-heptose 1,7-bisphosphate + ADP + H(+). The catalysed reaction is D-glycero-beta-D-manno-heptose 1-phosphate + ATP + H(+) = ADP-D-glycero-beta-D-manno-heptose + diphosphate. The protein operates within nucleotide-sugar biosynthesis; ADP-L-glycero-beta-D-manno-heptose biosynthesis; ADP-L-glycero-beta-D-manno-heptose from D-glycero-beta-D-manno-heptose 7-phosphate: step 1/4. Its pathway is nucleotide-sugar biosynthesis; ADP-L-glycero-beta-D-manno-heptose biosynthesis; ADP-L-glycero-beta-D-manno-heptose from D-glycero-beta-D-manno-heptose 7-phosphate: step 3/4. Functionally, catalyzes the phosphorylation of D-glycero-D-manno-heptose 7-phosphate at the C-1 position to selectively form D-glycero-beta-D-manno-heptose-1,7-bisphosphate. Catalyzes the ADP transfer from ATP to D-glycero-beta-D-manno-heptose 1-phosphate, yielding ADP-D-glycero-beta-D-manno-heptose. The sequence is that of Bifunctional protein HldE from Yersinia pestis bv. Antiqua (strain Antiqua).